Reading from the N-terminus, the 509-residue chain is Ribonuclease Y (509 aa).

The chain crosses the membrane as a helical span at residues 5–25 (IIILLSVFCGIFFICFIICSS). In terms of domain architecture, KH spans 199–259 (TTNIVKLPSD…IRREIATRTL (61 aa)). Residues 325-418 (VLAHSIEVAK…VAIADSISAS (94 aa)) form the HD domain.

This sequence belongs to the RNase Y family.

It localises to the cell membrane. Endoribonuclease that initiates mRNA decay. The polypeptide is Ribonuclease Y (Mycoplasma mycoides subsp. mycoides SC (strain CCUG 32753 / NCTC 10114 / PG1)).